Reading from the N-terminus, the 231-residue chain is MKIGIIGAMEPEVAHLIAAMTNATSQTIAGIEFIAGTLAGKDVVVTRSGIGKVAASIATTLLIEKYAPDAVINTGSAGGFVDTLAIGDIVISSEVRHHDVDVTAFGYEIGQMAQQPAAFIPAAHLVEAANKAIAQLGEVKAIEGLICTGDSFICDPVRTQAMLKNFPTMAACEMEGAAIAQVCHQFGVPFVVIRSLSDNANNDSPVDFDSYIVKAGYHSALMVMLLLEQLK.

Glutamate 12 functions as the Proton acceptor in the catalytic mechanism. Substrate-binding positions include glycine 78, isoleucine 153, and 174 to 175 (ME). Aspartate 198 functions as the Proton donor in the catalytic mechanism.

The protein belongs to the PNP/UDP phosphorylase family. MtnN subfamily.

The catalysed reaction is S-adenosyl-L-homocysteine + H2O = S-(5-deoxy-D-ribos-5-yl)-L-homocysteine + adenine. It catalyses the reaction S-methyl-5'-thioadenosine + H2O = 5-(methylsulfanyl)-D-ribose + adenine. The enzyme catalyses 5'-deoxyadenosine + H2O = 5-deoxy-D-ribose + adenine. Its pathway is amino-acid biosynthesis; L-methionine biosynthesis via salvage pathway; S-methyl-5-thio-alpha-D-ribose 1-phosphate from S-methyl-5'-thioadenosine (hydrolase route): step 1/2. Functionally, catalyzes the irreversible cleavage of the glycosidic bond in both 5'-methylthioadenosine (MTA) and S-adenosylhomocysteine (SAH/AdoHcy) to adenine and the corresponding thioribose, 5'-methylthioribose and S-ribosylhomocysteine, respectively. Also cleaves 5'-deoxyadenosine, a toxic by-product of radical S-adenosylmethionine (SAM) enzymes, into 5-deoxyribose and adenine. This chain is 5'-methylthioadenosine/S-adenosylhomocysteine nucleosidase, found in Shewanella putrefaciens (strain CN-32 / ATCC BAA-453).